The following is a 391-amino-acid chain: Elongation factor Tu (391 aa).

The tr-type G domain maps to 10-201 (KPHVNIGTIG…AVDAYIPTPE (192 aa)). A G1 region spans residues 19–26 (GHVDHGKT). 19 to 26 (GHVDHGKT) is a GTP binding site. Position 26 (Thr-26) interacts with Mg(2+). The G2 stretch occupies residues 55 to 59 (GITIS). The tract at residues 76–79 (DCPG) is G3. GTP-binding positions include 76-80 (DCPGH) and 131-134 (NKVD). Positions 131 to 134 (NKVD) are G4. The interval 169-171 (SAL) is G5.

Belongs to the TRAFAC class translation factor GTPase superfamily. Classic translation factor GTPase family. EF-Tu/EF-1A subfamily. Monomer.

The protein resides in the cytoplasm. It catalyses the reaction GTP + H2O = GDP + phosphate + H(+). Its function is as follows. GTP hydrolase that promotes the GTP-dependent binding of aminoacyl-tRNA to the A-site of ribosomes during protein biosynthesis. This chain is Elongation factor Tu, found in Rhizobium johnstonii (strain DSM 114642 / LMG 32736 / 3841) (Rhizobium leguminosarum bv. viciae).